A 116-amino-acid chain; its full sequence is MGNAMLAEPRTLTKAELAELLFERVGLNKREAKDIVDTFFEEIREALARGDSVKLSGFGNFQVRDKPPRPGRNPKTGETIPIAARRVVTFHASQKLKSTVEQSGNPAEVSDDEAAE.

Disordered regions lie at residues 58–80 (FGNF…GETI) and 94–116 (QKLK…EAAE). Polar residues predominate over residues 94–105 (QKLKSTVEQSGN).

This sequence belongs to the bacterial histone-like protein family. As to quaternary structure, heterodimer of an alpha and a beta chain.

Its function is as follows. This protein is one of the two subunits of integration host factor, a specific DNA-binding protein that functions in genetic recombination as well as in transcriptional and translational control. This Bordetella avium (strain 197N) protein is Integration host factor subunit alpha.